A 155-amino-acid polypeptide reads, in one-letter code: 17.3 kDa class II heat shock protein (155 aa).

Residues 39-155 (DAKAMAATPA…KPKTIEVKVA (117 aa)) form the sHSP domain.

Belongs to the small heat shock protein (HSP20) family.

The protein localises to the cytoplasm. The sequence is that of 17.3 kDa class II heat shock protein from Solanum peruvianum (Peruvian tomato).